Consider the following 455-residue polypeptide: UDP-N-acetylmuramoylalanine--D-glutamate ligase (455 aa).

117-123 is a binding site for ATP; the sequence is GTNGKTT.

The protein belongs to the MurCDEF family.

It localises to the cytoplasm. It catalyses the reaction UDP-N-acetyl-alpha-D-muramoyl-L-alanine + D-glutamate + ATP = UDP-N-acetyl-alpha-D-muramoyl-L-alanyl-D-glutamate + ADP + phosphate + H(+). The protein operates within cell wall biogenesis; peptidoglycan biosynthesis. Functionally, cell wall formation. Catalyzes the addition of glutamate to the nucleotide precursor UDP-N-acetylmuramoyl-L-alanine (UMA). In Pelotomaculum thermopropionicum (strain DSM 13744 / JCM 10971 / SI), this protein is UDP-N-acetylmuramoylalanine--D-glutamate ligase.